The following is a 167-amino-acid chain: Lipoprotein signal peptidase (167 aa).

A run of 3 helical transmembrane segments spans residues 9 to 29 (AWLYLSIAVSVFLLDIITKNL), 68 to 88 (LPLLLITPVIALIITFLYALY), and 98 to 118 (MGLIGGGALGNLYDRLFLGMV). Active-site residues include aspartate 120 and aspartate 138. The chain crosses the membrane as a helical span at residues 130 to 150 (YWPAFNIADASISIGIALLIL).

This sequence belongs to the peptidase A8 family.

Its subcellular location is the cell inner membrane. The catalysed reaction is Release of signal peptides from bacterial membrane prolipoproteins. Hydrolyzes -Xaa-Yaa-Zaa-|-(S,diacylglyceryl)Cys-, in which Xaa is hydrophobic (preferably Leu), and Yaa (Ala or Ser) and Zaa (Gly or Ala) have small, neutral side chains.. It functions in the pathway protein modification; lipoprotein biosynthesis (signal peptide cleavage). Its function is as follows. This protein specifically catalyzes the removal of signal peptides from prolipoproteins. The sequence is that of Lipoprotein signal peptidase from Aquifex aeolicus (strain VF5).